The following is a 405-amino-acid chain: D-threonate kinase (405 aa).

Residues aspartate 12, arginine 59, and 88-91 (KVDS) contribute to the substrate site. Residues serine 243, 337 to 340 (GGDG), and glycine 383 each bind ATP.

It belongs to the four-carbon acid sugar kinase family.

It carries out the reaction D-threonate + ATP = 4-O-phospho-D-threonate + ADP + H(+). Its function is as follows. Catalyzes the ATP-dependent phosphorylation of D-threonate to D-threonate 4-phosphate. Can also phosphorylate 4-hydroxy-L-threonine, with lower efficiency. The protein is D-threonate kinase of Bordetella bronchiseptica (strain ATCC BAA-588 / NCTC 13252 / RB50) (Alcaligenes bronchisepticus).